A 511-amino-acid chain; its full sequence is Fas-activated serine/threonine kinase (511 aa).

The RAP domain occupies Val439–Gln497.

The protein belongs to the FAST protein kinase family. In terms of assembly, interacts with TIA1; the interactions leads to TIA1 phosphorylation. Interacts with TIAR. Autophosphorylated on serine/threonine residues. Activated by dephosphorylation.

Its subcellular location is the mitochondrion matrix. The catalysed reaction is L-seryl-[Fas-activated protein] + ATP = O-phospho-L-seryl-[Fas-activated protein] + ADP + H(+). It catalyses the reaction L-threonyl-[Fas-activated protein] + ATP = O-phospho-L-threonyl-[Fas-activated protein] + ADP + H(+). It carries out the reaction L-seryl-[protein] + ATP = O-phospho-L-seryl-[protein] + ADP + H(+). The enzyme catalyses L-threonyl-[protein] + ATP = O-phospho-L-threonyl-[protein] + ADP + H(+). Phosphorylates the splicing regulator TIA1, thereby promoting the inclusion of FAS exon 6, which leads to an mRNA encoding a pro-apoptotic form of the receptor. Required for the biogenesis of some mitochondrial-encoded mRNAs, specifically stabilizes ND6 (NADH dehydrogenase complex subunit 6) mRNA, and regulates its levels. This chain is Fas-activated serine/threonine kinase (Fastk), found in Mus musculus (Mouse).